A 185-amino-acid chain; its full sequence is MLNQIKKDAQDRMEKSLEALKGHISKIRTGRAQPSLLDAIQVEYYGAATPLRQLANVVAEDARTLAVTVFDRSLISAVEKAILTSDLGLNPSSAGTTIRVPLPPLTEERRRDLIKIVKGEGEQGKVAVRNVRRDANDKIKALLKDKEISENEQHKAEEEIQKITDIYIKKVDEVLADKEKELMDF.

The protein belongs to the RRF family.

The protein resides in the cytoplasm. Its function is as follows. Responsible for the release of ribosomes from messenger RNA at the termination of protein biosynthesis. May increase the efficiency of translation by recycling ribosomes from one round of translation to another. This Haemophilus influenzae (strain ATCC 51907 / DSM 11121 / KW20 / Rd) protein is Ribosome-recycling factor.